Reading from the N-terminus, the 961-residue chain is Outer capsid protein VP2 (961 aa).

This sequence belongs to the orbivirus VP2 family.

The protein resides in the virion. The VP2 protein is one of the two proteins (with VP5) which constitute the virus particle outer capsid. It is the major target of the host immunogenic response. Responsible for viral attachment to target host cell, probably by binding to sialic acid. This attachment induces virion internalization predominantly through clathrin-dependent endocytosis. This chain is Outer capsid protein VP2 (Segment-2), found in Bluetongue virus 1 (isolate South Africa vaccine) (BTV 1).